The following is a 209-amino-acid chain: Uracil phosphoribosyltransferase (209 aa).

Residues Arg-79, Arg-104, and 131 to 139 (DPMLATGAS) contribute to the 5-phospho-alpha-D-ribose 1-diphosphate site. Residues Ile-194 and 199–201 (GDA) contribute to the uracil site. Asp-200 lines the 5-phospho-alpha-D-ribose 1-diphosphate pocket.

This sequence belongs to the UPRTase family. It depends on Mg(2+) as a cofactor.

The enzyme catalyses UMP + diphosphate = 5-phospho-alpha-D-ribose 1-diphosphate + uracil. Its pathway is pyrimidine metabolism; UMP biosynthesis via salvage pathway; UMP from uracil: step 1/1. Allosterically activated by GTP. Catalyzes the conversion of uracil and 5-phospho-alpha-D-ribose 1-diphosphate (PRPP) to UMP and diphosphate. The polypeptide is Uracil phosphoribosyltransferase (Staphylococcus saprophyticus subsp. saprophyticus (strain ATCC 15305 / DSM 20229 / NCIMB 8711 / NCTC 7292 / S-41)).